The primary structure comprises 304 residues: Oxygen-dependent coproporphyrinogen-III oxidase (304 aa).

Ser-94 contributes to the substrate binding site. A divalent metal cation-binding residues include His-98 and His-108. Residue His-108 is the Proton donor of the active site. Substrate is bound at residue 110–112 (NVR). The a divalent metal cation site is built by His-147 and His-177. Residues 242–277 (YVEFNLVYDRGTLFGLQSGGRTESILMSLPPVAHWR) form an important for dimerization region. 260–262 (GGR) is a binding site for substrate.

It belongs to the aerobic coproporphyrinogen-III oxidase family. Homodimer. It depends on a divalent metal cation as a cofactor.

The protein localises to the cytoplasm. It carries out the reaction coproporphyrinogen III + O2 + 2 H(+) = protoporphyrinogen IX + 2 CO2 + 2 H2O. The protein operates within porphyrin-containing compound metabolism; protoporphyrin-IX biosynthesis; protoporphyrinogen-IX from coproporphyrinogen-III (O2 route): step 1/1. In terms of biological role, involved in the heme biosynthesis. Catalyzes the aerobic oxidative decarboxylation of propionate groups of rings A and B of coproporphyrinogen-III to yield the vinyl groups in protoporphyrinogen-IX. This is Oxygen-dependent coproporphyrinogen-III oxidase from Methylococcus capsulatus (strain ATCC 33009 / NCIMB 11132 / Bath).